The chain runs to 161 residues: Endoribonuclease YbeY (161 aa).

Zn(2+)-binding residues include histidine 127, histidine 131, and histidine 137.

Belongs to the endoribonuclease YbeY family. The cofactor is Zn(2+).

It localises to the cytoplasm. In terms of biological role, single strand-specific metallo-endoribonuclease involved in late-stage 70S ribosome quality control and in maturation of the 3' terminus of the 16S rRNA. The protein is Endoribonuclease YbeY of Listeria monocytogenes serotype 4a (strain HCC23).